The primary structure comprises 80 residues: UPF0154 protein SZO_03240 (80 aa).

A helical transmembrane segment spans residues 4-24 (AIWILLIIVALTAGLFGGIFI).

The protein belongs to the UPF0154 family.

It is found in the cell membrane. The chain is UPF0154 protein SZO_03240 from Streptococcus equi subsp. zooepidemicus (strain H70).